The sequence spans 336 residues: Coproporphyrin III ferrochelatase (336 aa).

Positions 52 and 116 each coordinate Fe-coproporphyrin III. Fe(2+) is bound by residues H172 and E255.

It belongs to the ferrochelatase family.

It localises to the cytoplasm. The enzyme catalyses Fe-coproporphyrin III + 2 H(+) = coproporphyrin III + Fe(2+). The protein operates within porphyrin-containing compound metabolism; protoheme biosynthesis. In terms of biological role, involved in coproporphyrin-dependent heme b biosynthesis. Catalyzes the insertion of ferrous iron into coproporphyrin III to form Fe-coproporphyrin III. This is Coproporphyrin III ferrochelatase from Mycolicibacterium paratuberculosis (strain ATCC BAA-968 / K-10) (Mycobacterium paratuberculosis).